Here is a 142-residue protein sequence, read N- to C-terminus: MVLSPADKTNVKAAWDKVGGHAGDYGAEALERMFLSFPTTKTYFPHFDLSHGSAQVKGHGKKVGDALGNAVAHMDDLPGALSALSDLHAYKLRVDPVNFKLLSHCLLVTLACHHPGDFTPAVHASLDKFLASVSTVLVSKYR.

Residues 2–142 (VLSPADKTNV…VSTVLVSKYR (141 aa)) form the Globin domain. The residue at position 4 (S4) is a Phosphoserine. K8 bears the N6-succinyllysine mark. At T9 the chain carries Phosphothreonine. Position 12 is an N6-succinyllysine (K12). Position 17 is an N6-acetyllysine; alternate (K17). K17 carries the N6-succinyllysine; alternate modification. Position 25 is a phosphotyrosine (Y25). S36 bears the Phosphoserine mark. K41 carries the N6-succinyllysine modification. S50 is modified (phosphoserine). H59 serves as a coordination point for O2. Residue H88 participates in heme b binding. S103 carries the post-translational modification Phosphoserine. T109 carries the post-translational modification Phosphothreonine. Phosphoserine is present on residues S125 and S132. Residue T135 is modified to Phosphothreonine. Position 139 is a phosphoserine (S139).

This sequence belongs to the globin family. In terms of assembly, heterotetramer of two alpha chains and two beta chains. In terms of tissue distribution, red blood cells.

Involved in oxygen transport from the lung to the various peripheral tissues. In terms of biological role, hemopressin acts as an antagonist peptide of the cannabinoid receptor CNR1. Hemopressin-binding efficiently blocks cannabinoid receptor CNR1 and subsequent signaling. The sequence is that of Hemoglobin subunit alpha (HBA) from Antrozous pallidus (Pallid bat).